The primary structure comprises 137 residues: Phospholipase A2 group V (137 aa).

A signal peptide spans 1–20 (MKRLLTLAWFLACSVPAVPG). Intrachain disulfides connect cysteine 46/cysteine 137, cysteine 48/cysteine 64, cysteine 63/cysteine 117, cysteine 70/cysteine 110, cysteine 79/cysteine 103, and cysteine 97/cysteine 108. Ca(2+)-binding residues include tyrosine 47, glycine 49, and glycine 51. Histidine 67 is an active-site residue. Aspartate 68 is a binding site for Ca(2+). The active site involves aspartate 111.

Belongs to the phospholipase A2 family. It depends on Ca(2+) as a cofactor. Post-translationally, this enzyme lacks one of the seven disulfide bonds found in similar PA2 proteins.

The protein resides in the secreted. The protein localises to the cell membrane. It localises to the cytoplasmic vesicle. Its subcellular location is the phagosome. It is found in the recycling endosome. The protein resides in the golgi apparatus. The protein localises to the cis-Golgi network. It localises to the trans-Golgi network. It catalyses the reaction a 1,2-diacyl-sn-glycero-3-phosphocholine + H2O = a 1-acyl-sn-glycero-3-phosphocholine + a fatty acid + H(+). The enzyme catalyses 1-hexadecanoyl-2-(9Z-octadecenoyl)-sn-glycero-3-phosphocholine + H2O = 1-hexadecanoyl-sn-glycero-3-phosphocholine + (9Z)-octadecenoate + H(+). It carries out the reaction 1-hexadecanoyl-2-(5Z,8Z,11Z,14Z-eicosatetraenoyl)-sn-glycero-3-phosphocholine + H2O = 1-hexadecanoyl-sn-glycero-3-phosphocholine + (5Z,8Z,11Z,14Z)-eicosatetraenoate + H(+). The catalysed reaction is 1-hexadecanoyl-2-(9Z,12Z-octadecadienoyl)-sn-glycero-3-phosphoethanolamine + H2O = 1-hexadecanoyl-sn-glycero-3-phosphoethanolamine + (9Z,12Z)-octadecadienoate + H(+). It catalyses the reaction 1-hexadecanoyl-2-(5Z,8Z,11Z,14Z-eicosatetraenoyl)-sn-glycero-3-phosphoethanolamine + H2O = 1-hexadecanoyl-sn-glycero-3-phosphoethanolamine + (5Z,8Z,11Z,14Z)-eicosatetraenoate + H(+). The enzyme catalyses 1-octadecanoyl-2-(5Z,8Z,11Z,14Z-eicosatetraenoyl)-sn-glycero-3-phospho-(1D-myo-inositol) + H2O = 1-octadecanoyl-sn-glycero-3-phospho-(1D-myo-inositol) + (5Z,8Z,11Z,14Z)-eicosatetraenoate + H(+). It carries out the reaction 1-hexadecanoyl-2-(9Z-octadecenoyl)-sn-glycero-3-phosphoglycerol + H2O = 1-hexadecanoyl-sn-glycero-3-phosphoglycerol + (9Z)-octadecenoate + H(+). The catalysed reaction is N-hexadecanoyl-1,2-di-(9Z-octadecenoyl)-sn-glycero-3-phosphoethanolamine + H2O = N-hexadecanoyl-1-(9Z-octadecenoyl)-sn-glycero-3-phosphoethanolamine + (9Z)-octadecenoate + H(+). It catalyses the reaction 1'-[1,2-di-(9Z-octadecenoyl)-sn-glycero-3-phospho]-3'-[1-(9Z-octadecenoyl)-sn-glycero-3-phospho]-glycerol + H2O = 1',3'-bis-[1-(9Z-octadecenoyl)-sn-glycero-3-phospho]-glycerol + (9Z)-octadecenoate + H(+). The enzyme catalyses 1',3'-bis[1,2-di-(9Z-octadecenoyl)-sn-glycero-3-phospho]-glycerol + H2O = 1'-[1,2-di-(9Z-octadecenoyl)-sn-glycero-3-phospho]-3'-[1-(9Z-octadecenoyl)-sn-glycero-3-phospho]-glycerol + (9Z)-octadecenoate + H(+). It participates in lipid metabolism; phospholipid metabolism. Its pathway is lipid metabolism; leukotriene B4 biosynthesis. The protein operates within lipid metabolism; leukotriene C4 biosynthesis. Secretory calcium-dependent phospholipase A2 that primarily targets extracellular phospholipids. Hydrolyzes the ester bond of the fatty acyl group attached at sn-2 position of phospholipids (phospholipase A2 activity), preferentially releasing fatty acyl groups with a low degree of unsaturation such as oleoyl (C18:1) and linoleoyl (C18:2) groups. Hydrolyzes low-density lipoprotein (LDL) phospholipids releasing unsaturated fatty acids that drive macrophage polarization toward an M2 phenotype. May act in an autocrine and paracrine manner. Contributes to lipid remodeling of cellular membranes at different subcellular locations and generation of lipid mediators involved in pathogen clearance. Cleaves sn-2 fatty acyl chains of cardiolipin, a major component of the inner membrane of mitochondria and bacterial membranes. Promotes phagocytosis of bacteria in macrophages through production of lysophosphatidylethanolamines. Displays bactericidal activity against Gram-positive bacteria by directly hydrolyzing phospholipids of the bacterial membrane. Promotes phagocytosis and killing of ingested fungi likely through controlling phagosome-lysosome fusion and phagosome maturation. Plays a role in biosynthesis of cysteinyl leukotrienes (CysLTs) in myeloid cells. In eosinophils, triggers perinuclear arachidonate release and LTC4 synthesis in a PLA2G4A-independent way. In neutrophils, amplifies CysLTs biosynthesis initiated by PLA2G4A. Promotes immune complex clearance in macrophages via stimulating synthesis of CysLTs, which act through CYSLTR1 to trigger phagocytosis. May regulate antigen processing in antigen-presenting cells. In pulmonary macrophages regulates IL33 production required for activation of group 2 innate lymphoid cells. May play a role in the biosynthesis of N-acyl ethanolamines that regulate energy metabolism. Hydrolyzes N-acyl phosphatidylethanolamines to N-acyl lysophosphatidylethanolamines, which are further cleaved by a lysophospholipase D to release N-acyl ethanolamines. This chain is Phospholipase A2 group V (Pla2g5), found in Rattus norvegicus (Rat).